Reading from the N-terminus, the 91-residue chain is Small ribosomal subunit protein uS19 (91 aa).

The protein belongs to the universal ribosomal protein uS19 family.

Functionally, protein S19 forms a complex with S13 that binds strongly to the 16S ribosomal RNA. This is Small ribosomal subunit protein uS19 from Cupriavidus taiwanensis (strain DSM 17343 / BCRC 17206 / CCUG 44338 / CIP 107171 / LMG 19424 / R1) (Ralstonia taiwanensis (strain LMG 19424)).